A 339-amino-acid polypeptide reads, in one-letter code: Protein H339R (339 aa).

The protein belongs to the asfivirus H339R family. Interacts with NACA (alpha chain of nascent polypeptide-associated complex).

The protein localises to the host cytoplasm. It is found in the host nucleus. Its subcellular location is the virion. This chain is Protein H339R, found in African swine fever virus (strain Badajoz 1971 Vero-adapted) (Ba71V).